The chain runs to 351 residues: DNA beta-glucosyltransferase (351 aa).

As to quaternary structure, monomer.

It catalyses the reaction Transfers a beta-D-glucosyl residue from UDP-alpha-D-glucose to a hydroxymethylcytosine residue in DNA.. The protein operates within genetic information processing; DNA modification. Functionally, catalyzes the transfer of glucose from uridine diphosphoglucose to 5-hydroxymethyl cytosine of T4 DNA to yield glucosyl 5-hydroxymethyl cytosine (glc-HMC). This DNA process seems to occur immediately after DNA synthesis since the DNA alpha-glucosyltransferase interacts with the clamp protein gp45. The glc-HMC modification protects the phage genome against its own nucleases and the host restriction endonuclease system. The glc-HMC modification also protects against the host CRISPR-Cas9 defense system. The chain is DNA beta-glucosyltransferase (bgt) from Enterobacteria phage T4 (Bacteriophage T4).